Reading from the N-terminus, the 251-residue chain is MVDKSQETTHFGFQTVAKEQKADMVAHVFHSVASKYDVMNDLMSFGIHRLWKRFTIDCSGVRRGQTVLDLAGGTGDLTAKFSRLVGETGKVVLADINESMLKMGREKLRNIGVIGNVEYVQANAEALPFPDNTFDCITISFGLRNVTDKDKALRSMYRVLKPGGRLLVLEFSKPIIEPLSKAYDAYSFHVLPRIGSLVANDADSYRYLAESIRMHPDQDTLKTMMQDAGFESVDYYNLTAGVVALHRGYKF.

S-adenosyl-L-methionine contacts are provided by residues threonine 74, aspartate 95, 123-124 (NA), and serine 140.

The protein belongs to the class I-like SAM-binding methyltransferase superfamily. MenG/UbiE family.

It catalyses the reaction a 2-demethylmenaquinol + S-adenosyl-L-methionine = a menaquinol + S-adenosyl-L-homocysteine + H(+). The catalysed reaction is a 2-methoxy-6-(all-trans-polyprenyl)benzene-1,4-diol + S-adenosyl-L-methionine = a 5-methoxy-2-methyl-3-(all-trans-polyprenyl)benzene-1,4-diol + S-adenosyl-L-homocysteine + H(+). Its pathway is quinol/quinone metabolism; menaquinone biosynthesis; menaquinol from 1,4-dihydroxy-2-naphthoate: step 2/2. It participates in cofactor biosynthesis; ubiquinone biosynthesis. Methyltransferase required for the conversion of demethylmenaquinol (DMKH2) to menaquinol (MKH2) and the conversion of 2-polyprenyl-6-methoxy-1,4-benzoquinol (DDMQH2) to 2-polyprenyl-3-methyl-6-methoxy-1,4-benzoquinol (DMQH2). The polypeptide is Ubiquinone/menaquinone biosynthesis C-methyltransferase UbiE (Escherichia coli O1:K1 / APEC).